Reading from the N-terminus, the 601-residue chain is Elongation factor 4 (601 aa).

The tr-type G domain occupies 7-189; the sequence is DNIRNFSIVA…AIVKRLPPPK (183 aa). Residues 19-24 and 136-139 each bind GTP; these read DHGKST and NKVD.

It belongs to the TRAFAC class translation factor GTPase superfamily. Classic translation factor GTPase family. LepA subfamily.

It localises to the cell inner membrane. The enzyme catalyses GTP + H2O = GDP + phosphate + H(+). In terms of biological role, required for accurate and efficient protein synthesis under certain stress conditions. May act as a fidelity factor of the translation reaction, by catalyzing a one-codon backward translocation of tRNAs on improperly translocated ribosomes. Back-translocation proceeds from a post-translocation (POST) complex to a pre-translocation (PRE) complex, thus giving elongation factor G a second chance to translocate the tRNAs correctly. Binds to ribosomes in a GTP-dependent manner. This chain is Elongation factor 4, found in Methylorubrum populi (strain ATCC BAA-705 / NCIMB 13946 / BJ001) (Methylobacterium populi).